A 733-amino-acid chain; its full sequence is Alpha,alpha-trehalose-phosphate synthase [UDP-forming] A (733 aa).

It in the N-terminal section; belongs to the glycosyltransferase 20 family. In the C-terminal section; belongs to the trehalose phosphatase family.

It carries out the reaction D-glucose 6-phosphate + UDP-alpha-D-glucose = alpha,alpha-trehalose 6-phosphate + UDP + H(+). In terms of biological role, synthesizes trehalose 6-phosphate, the precursor for the production of trehalose, the main carbohydrate storage reserve of the dormant spore. Trehalose accumulates in both prestalk and prespore cells and then is rapidly metabolized during terminal differentiation of stalk cells, while being stored in spores, where it serves as the principal energy and carbon source for germination. The polypeptide is Alpha,alpha-trehalose-phosphate synthase [UDP-forming] A (tpsA) (Dictyostelium discoideum (Social amoeba)).